A 364-amino-acid chain; its full sequence is Anthranilate phosphoribosyltransferase 1 (364 aa).

Residues glycine 102, 105-106 (GD), threonine 110, 112-115 (NIST), 130-138 (KHGNRSASS), and serine 142 contribute to the 5-phospho-alpha-D-ribose 1-diphosphate site. Residue glycine 102 coordinates anthranilate. Serine 114 contributes to the Mg(2+) binding site. Asparagine 133 serves as a coordination point for anthranilate. An anthranilate-binding site is contributed by arginine 188. Aspartate 247 and glutamate 248 together coordinate Mg(2+).

This sequence belongs to the anthranilate phosphoribosyltransferase family. Homodimer. The cofactor is Mg(2+).

It carries out the reaction N-(5-phospho-beta-D-ribosyl)anthranilate + diphosphate = 5-phospho-alpha-D-ribose 1-diphosphate + anthranilate. It functions in the pathway amino-acid biosynthesis; L-tryptophan biosynthesis; L-tryptophan from chorismate: step 2/5. Its function is as follows. Catalyzes the transfer of the phosphoribosyl group of 5-phosphorylribose-1-pyrophosphate (PRPP) to anthranilate to yield N-(5'-phosphoribosyl)-anthranilate (PRA). In Nostoc sp. (strain PCC 7120 / SAG 25.82 / UTEX 2576), this protein is Anthranilate phosphoribosyltransferase 1.